Reading from the N-terminus, the 375-residue chain is uncharacterized protein (375 aa).

This is an uncharacterized protein from Ureaplasma parvum serovar 3 (strain ATCC 700970).